A 250-amino-acid chain; its full sequence is Orotidine 5'-phosphate decarboxylase (250 aa).

Substrate-binding positions include aspartate 9, lysine 40, 67-76 (DLKFHDIPNT), threonine 132, arginine 190, glutamine 204, glycine 224, and arginine 225. The active-site Proton donor is lysine 69.

Belongs to the OMP decarboxylase family. Type 1 subfamily. Homodimer.

The enzyme catalyses orotidine 5'-phosphate + H(+) = UMP + CO2. It participates in pyrimidine metabolism; UMP biosynthesis via de novo pathway; UMP from orotate: step 2/2. Catalyzes the decarboxylation of orotidine 5'-monophosphate (OMP) to uridine 5'-monophosphate (UMP). In Nitratidesulfovibrio vulgaris (strain DSM 19637 / Miyazaki F) (Desulfovibrio vulgaris), this protein is Orotidine 5'-phosphate decarboxylase.